The chain runs to 536 residues: T-complex protein 1 subunit delta (536 aa).

A compositionally biased stretch (polar residues) spans 1–15 (MPEGKATSSASNTGK). Residues 1–26 (MPEGKATSSASNTGKNKGGAYQDRDK) form a disordered region. Glycine 50 contacts ADP. Glycine 50 lines the ATP pocket. Residue aspartate 101 coordinates Mg(2+). Positions 102, 103, 104, 105, 170, 171, 422, and 507 each coordinate ADP. ATP-binding residues include glycine 102 and threonine 103. Residue lysine 171 coordinates ATP.

Belongs to the TCP-1 chaperonin family. As to quaternary structure, component of the chaperonin-containing T-complex (TRiC), a hexadecamer composed of two identical back-to-back stacked rings enclosing a protein folding chamber. Each ring is made up of eight different subunits: TCP1/CCT1, CCT2, CCT3, CCT4, CCT5, CCT6A/CCT6, CCT7, CCT8.

The protein localises to the cytoplasm. It carries out the reaction ATP + H2O = ADP + phosphate + H(+). In terms of biological role, component of the chaperonin-containing T-complex (TRiC), a molecular chaperone complex that assists the folding of actin, tubulin and other proteins upon ATP hydrolysis. This Takifugu rubripes (Japanese pufferfish) protein is T-complex protein 1 subunit delta (cct4).